Here is a 121-residue protein sequence, read N- to C-terminus: Cytochrome B5-like protein (121 aa).

Residues 1–21 (MIAVIGLLLGFLVSALFLIQG) form a helical membrane-spanning segment. The interval 24–49 (RRTNDNQEKKRSSSEPVEDVVRPKSY) is disordered. Basic and acidic residues predominate over residues 26 to 36 (TNDNQEKKRSS). The 76-residue stretch at 46–121 (PKSYSKSEVA…IEDFYIGELH (76 aa)) folds into the Cytochrome b5 heme-binding domain. The heme site is built by histidine 81 and histidine 104.

This sequence belongs to the cytochrome b5 family.

Its subcellular location is the membrane. This Arabidopsis thaliana (Mouse-ear cress) protein is Cytochrome B5-like protein.